The primary structure comprises 35 residues: Photosystem II reaction center protein M (35 aa).

A helical membrane pass occupies residues 7–27 (GLLATILVILVPSIFLVILYV).

It belongs to the PsbM family. PSII is composed of 1 copy each of membrane proteins PsbA, PsbB, PsbC, PsbD, PsbE, PsbF, PsbH, PsbI, PsbJ, PsbK, PsbL, PsbM, PsbT, PsbX, PsbY, PsbZ, Psb30/Ycf12, peripheral proteins PsbO, CyanoQ (PsbQ), PsbU, PsbV and a large number of cofactors. It forms dimeric complexes.

It is found in the cellular thylakoid membrane. In terms of biological role, one of the components of the core complex of photosystem II (PSII). PSII is a light-driven water:plastoquinone oxidoreductase that uses light energy to abstract electrons from H(2)O, generating O(2) and a proton gradient subsequently used for ATP formation. It consists of a core antenna complex that captures photons, and an electron transfer chain that converts photonic excitation into a charge separation. This subunit is found at the monomer-monomer interface. This Synechococcus sp. (strain JA-3-3Ab) (Cyanobacteria bacterium Yellowstone A-Prime) protein is Photosystem II reaction center protein M.